The chain runs to 229 residues: MNQWEELQESVGFDFQDVELLKQAFTHSSYVNEHRRENVKDNERLEFLGDAVLELTVSNYLFNKYPDMAEGHMTKMRAAIVCEPSLVEFAEAIHFSKYIRLGKGEEKAGGRTRPALLADVFESFIGALYLDNGIDKVVTFLERVIFPKIDAGEYLQTVDYKTQLQEIVQRDRDVLIEYDILGETGPAHNKAFDAQVIVNGQVLGKGSGRTKKQAEQSAAQFAINQLTHR.

The 130-residue stretch at 4–133 folds into the RNase III domain; it reads WEELQESVGF…FIGALYLDNG (130 aa). Glu-46 is a binding site for Mg(2+). Residue Asp-50 is part of the active site. The Mg(2+) site is built by Asp-119 and Glu-122. Residue Glu-122 is part of the active site. The DRBM domain maps to 159–228; it reads DYKTQLQEIV…AQFAINQLTH (70 aa).

This sequence belongs to the ribonuclease III family. As to quaternary structure, homodimer. It depends on Mg(2+) as a cofactor.

The protein localises to the cytoplasm. It catalyses the reaction Endonucleolytic cleavage to 5'-phosphomonoester.. Digests double-stranded RNA. Involved in the processing of primary rRNA transcript to yield the immediate precursors to the large and small rRNAs (23S and 16S). Processes some mRNAs, and tRNAs when they are encoded in the rRNA operon. Processes pre-crRNA and tracrRNA of type II CRISPR loci if present in the organism. This chain is Ribonuclease 3, found in Listeria welshimeri serovar 6b (strain ATCC 35897 / DSM 20650 / CCUG 15529 / CIP 8149 / NCTC 11857 / SLCC 5334 / V8).